A 542-amino-acid chain; its full sequence is 2,3-bisphosphoglycerate-independent phosphoglycerate mutase (542 aa).

The Mn(2+) site is built by Asp24 and Ser74. Ser74 acts as the Phosphoserine intermediate in catalysis. Substrate is bound by residues His135, 165 to 166 (RD), Arg197, Arg203, 268 to 271 (RPDR), and Lys341. Residues Asp408, His412, Asp449, His450, and His467 each coordinate Mn(2+).

This sequence belongs to the BPG-independent phosphoglycerate mutase family. Monomer. It depends on Mn(2+) as a cofactor.

It carries out the reaction (2R)-2-phosphoglycerate = (2R)-3-phosphoglycerate. It functions in the pathway carbohydrate degradation; glycolysis; pyruvate from D-glyceraldehyde 3-phosphate: step 3/5. Catalyzes the interconversion of 2-phosphoglycerate and 3-phosphoglycerate. This is 2,3-bisphosphoglycerate-independent phosphoglycerate mutase from Prochlorococcus marinus (strain NATL1A).